The chain runs to 719 residues: Solute carrier family 15 member 2 (719 aa).

Topologically, residues 1-43 are cytoplasmic; that stretch reads MGKMKDKDVDAEKYEKAQRSPKLCGTNYPVSIAFIVVNEFCER. The helical transmembrane segment at 44 to 61 threads the bilayer; that stretch reads FSYYGMKAVLTLYFMNYL. At 62–69 the chain is on the extracellular side; that stretch reads HWDKNLST. Asparagine 66 is a glycosylation site (N-linked (GlcNAc...) asparagine). Residues 70-90 form a helical membrane-spanning segment; that stretch reads AIYHAFSGLCYFTPLLGALIA. At 91 to 99 the chain is on the cytoplasmic side; sequence DSWLGKFKT. A helical transmembrane segment spans residues 100–120; the sequence is IIYLSIVYVIGHVVKSVGAIP. Residues 121 to 125 are Extracellular-facing; the sequence is DVGDS. A helical membrane pass occupies residues 126-146; the sequence is TVHIALSMVGLGLIALGTGGI. Over 147 to 169 the chain is Cytoplasmic; the sequence is KPCVAAFGGDQFDEDNIDERRKF. A helical transmembrane segment spans residues 170–190; that stretch reads FSIFYMSINAGSVLSTIITPI. Residues 191–201 lie on the Extracellular side of the membrane; sequence LRGDVQCFGGD. The chain crosses the membrane as a helical span at residues 202–222; the sequence is CYALAFGVPAALMVIALVVFI. Over 223–280 the chain is Cytoplasmic; sequence SGSGLYKKSPPEGNVLVRVCKCIGFAISNRWTNSKKSPKRSHWLDWAEEKYSKRLIQE. A helical membrane pass occupies residues 281-301; that stretch reads IKMVCRVLVLYIPLPMFWALF. Residues 302 to 334 are Extracellular-facing; sequence DQQGSRWTLQATRMNMDFGGGFIIKPDQMQMLN. A helical transmembrane segment spans residues 335 to 355; sequence ALLILVFIPIFDMGIYPLVGL. At 356–367 the chain is on the cytoplasmic side; sequence CRIKLTPLKKMA. The helical transmembrane segment at 368–388 threads the bilayer; the sequence is TGMILAALAFCAATAVEVYVI. Residues 389–594 are Extracellular-facing; sequence KTVVEPPPAK…QANNIHIGWQ (206 aa). Positions 389 to 594 are extracellular domain (ECD); that stretch reads KTVVEPPPAK…QANNIHIGWQ (206 aa). N-linked (GlcNAc...) asparagine glycans are attached at residues asparagine 481, asparagine 513, and asparagine 532. The helical transmembrane segment at 595 to 615 threads the bilayer; it reads IPQYVFLTAGEVMFSITGLEF. The Cytoplasmic portion of the chain corresponds to 616–626; that stretch reads SYSQAPASMKS. Residues 627–647 form a helical membrane-spanning segment; sequence VLQAGWLMTVAFGNVIVLIVA. Over 648-657 the chain is Extracellular; it reads EGAGMEQWVE. The helical transmembrane segment at 658-678 threads the bilayer; it reads FLLFAALLVAVSIIFSIMAYF. The Cytoplasmic segment spans residues 679-719; it reads YTYVDPDQLDKLFKEDGDGGKVESSKKDELSLGDMPKQTKM. Residues 695 to 708 show a composition bias toward basic and acidic residues; the sequence is GDGGKVESSKKDEL. The disordered stretch occupies residues 695–719; it reads GDGGKVESSKKDELSLGDMPKQTKM.

The protein belongs to the major facilitator superfamily. Proton-dependent oligopeptide transporter (POT/PTR) (TC 2.A.17) family. Expressed in kidney, brain and gut. Also expressed weakly in eye, gill and skeletal muscle.

It is found in the apical cell membrane. Its subcellular location is the cytoplasmic vesicle. It localises to the phagosome membrane. The protein resides in the cell membrane. It carries out the reaction a dipeptide(out) + 2 H(+)(out) = a dipeptide(in) + 2 H(+)(in). It catalyses the reaction N-acetyl-D-muramoyl-L-alanyl-D-isoglutamine(out) + 3 H(+)(out) = N-acetyl-D-muramoyl-L-alanyl-D-isoglutamine(in) + 3 H(+)(in). The catalysed reaction is glycyl-L-leucine(out) + 2 H(+)(out) = glycyl-L-leucine(in) + 2 H(+)(in). The enzyme catalyses glycyl-L-lysine(out) + 2 H(+)(out) = glycyl-L-lysine(in) + 2 H(+)(in). It carries out the reaction glycyl-L-glutamate(out) + 3 H(+)(out) = glycyl-L-glutamate(in) + 3 H(+)(in). It catalyses the reaction L-alanyl-L-alanine(out) + 2 H(+)(out) = L-alanyl-L-alanine(in) + 2 H(+)(in). The catalysed reaction is an L-amino acid tripeptide(out) + 2 H(+)(out) = an L-amino acid tripeptide(in) + 2 H(+)(in). The enzyme catalyses carnosine(out) + 2 H(+)(out) = carnosine(in) + 2 H(+)(in). In terms of biological role, proton-coupled amino-acid transporter that transports oligopeptides of 2 to 4 amino acids with a preference for dipeptides. Transports neutral and anionic dipeptides with a proton to peptide stoichiometry of 2:1 or 3:1. This Danio rerio (Zebrafish) protein is Solute carrier family 15 member 2.